A 2083-amino-acid polypeptide reads, in one-letter code: Nonribosomal peptide synthetase sidD (2083 aa).

Residues 251–650 are adenylation 1; sequence TYRQIDQYSS…GEIESQLRAR (400 aa). Residues 764–840 enclose the Carrier 1 domain; it reads RELSDLERRL…AMASVVRICD (77 aa). At Ser-801 the chain carries O-(pantetheine 4'-phosphoryl)serine. The segment at 876 to 1146 is condensation 1; the sequence is EDIYPCTPTQ…IATVPIRVRI (271 aa). Positions 1336 to 1421 are adenylation 2; the sequence is LSPIGCVGEL…TEIERHLAEH (86 aa). A Carrier 2 domain is found at 1557–1633; it reads NHLSASESIL…DAARVMKVDE (77 aa). Ser-1594 bears the O-(pantetheine 4'-phosphoryl)serine mark. The segment at 1674–1946 is condensation 2; that stretch reads DVLPVTDSQD…YQLTPVRVPF (273 aa).

Belongs to the NRP synthetase family.

It participates in siderophore biosynthesis. Its function is as follows. Nonribosomal peptide synthetase; part of the siderophore biosynthetic pathway. Aspergillus fumigatus produces four types of siderophores, low-molecular-mass iron chelators, including excreted fusarinine C (FsC) and triacetylfusarinine C (TAFC) for iron uptake; and intacellular ferricrocin (FC) for hyphal and hydroxyferricrocin (HFC) for conidial iron distribution and storage. TAFC consists of three N(2)-acetyl-N(5)-anhydromevalonyl-N(5)-hydroxyornithine residues cyclically linked by ester bonds; FC is a cyclic hexapeptide with the structure Gly-Ser-Gly-(N(5)-acetyl-N(5)-hydroxyornithine)x3. The biosynthesis of all four siderophores depends on the hydroxylation of ornithine, catalyzed by the monooxygenase sidA. Subsequently, the pathways for biosynthesis of extra- and intracellular siderophores split. For biosynthesis of extracellular siderophores, the transacylase sidF transfers anhydromevalonyl to N(5)-hydroxyornithine. The required anhydromevalonyl-CoA moiety is derived from mevalonate by CoA ligation and dehydration catalyzed by sidI and sidH respectively. The acetylation of N(5)-hydroxyornithine for FC biosynthesis involves the constitutively expressed sidL. FC is hydroxylated to HFC by an as yet uncharacterized enzyme during conidiation. Assembly of fusarinine C (FsC) and FC is catalyzed by two different nonribosomal peptide synthetases (NRPS), sidD and sidC respectively. Subsequently, sidG catalyzes N2-acetylation of FsC for forming TAFC. Both extra- and intracellular siderophores are crucial for growth during iron limitation and virulence. This chain is Nonribosomal peptide synthetase sidD, found in Aspergillus fumigatus (strain ATCC MYA-4609 / CBS 101355 / FGSC A1100 / Af293) (Neosartorya fumigata).